The following is a 156-amino-acid chain: Protein Smg homolog (156 aa).

The protein belongs to the Smg family.

The chain is Protein Smg homolog from Halorhodospira halophila (strain DSM 244 / SL1) (Ectothiorhodospira halophila (strain DSM 244 / SL1)).